The primary structure comprises 449 residues: Bifunctional protein GlmU (449 aa).

Residues 1-228 (MSTALVILAA…EAETLGINSR (228 aa)) form a pyrophosphorylase region. UDP-N-acetyl-alpha-D-glucosamine contacts are provided by residues 8 to 11 (LAAG), Lys-22, Gln-75, 80 to 81 (GT), 103 to 105 (YGD), Gly-140, Glu-154, Asn-169, and Asn-226. Asp-105 lines the Mg(2+) pocket. Asn-226 lines the Mg(2+) pocket. Residues 229–249 (ADLAAAEAVFQAHARAELLDI) are linker. The tract at residues 250–449 (GVTLTAPETV…RAKKAAKAKG (200 aa)) is N-acetyltransferase. 2 residues coordinate UDP-N-acetyl-alpha-D-glucosamine: Arg-315 and Lys-333. The Proton acceptor role is filled by His-345. The UDP-N-acetyl-alpha-D-glucosamine site is built by Tyr-348 and Asn-359. Acetyl-CoA-binding positions include Ala-362, 368–369 (NY), Ser-387, Thr-405, and Arg-422.

In the N-terminal section; belongs to the N-acetylglucosamine-1-phosphate uridyltransferase family. It in the C-terminal section; belongs to the transferase hexapeptide repeat family. As to quaternary structure, homotrimer. Mg(2+) is required as a cofactor.

Its subcellular location is the cytoplasm. It catalyses the reaction alpha-D-glucosamine 1-phosphate + acetyl-CoA = N-acetyl-alpha-D-glucosamine 1-phosphate + CoA + H(+). The catalysed reaction is N-acetyl-alpha-D-glucosamine 1-phosphate + UTP + H(+) = UDP-N-acetyl-alpha-D-glucosamine + diphosphate. The protein operates within nucleotide-sugar biosynthesis; UDP-N-acetyl-alpha-D-glucosamine biosynthesis; N-acetyl-alpha-D-glucosamine 1-phosphate from alpha-D-glucosamine 6-phosphate (route II): step 2/2. It functions in the pathway nucleotide-sugar biosynthesis; UDP-N-acetyl-alpha-D-glucosamine biosynthesis; UDP-N-acetyl-alpha-D-glucosamine from N-acetyl-alpha-D-glucosamine 1-phosphate: step 1/1. It participates in bacterial outer membrane biogenesis; LPS lipid A biosynthesis. Functionally, catalyzes the last two sequential reactions in the de novo biosynthetic pathway for UDP-N-acetylglucosamine (UDP-GlcNAc). The C-terminal domain catalyzes the transfer of acetyl group from acetyl coenzyme A to glucosamine-1-phosphate (GlcN-1-P) to produce N-acetylglucosamine-1-phosphate (GlcNAc-1-P), which is converted into UDP-GlcNAc by the transfer of uridine 5-monophosphate (from uridine 5-triphosphate), a reaction catalyzed by the N-terminal domain. This chain is Bifunctional protein GlmU, found in Ruegeria sp. (strain TM1040) (Silicibacter sp.).